An 88-amino-acid chain; its full sequence is Cell division topological specificity factor (88 aa).

The protein belongs to the MinE family.

Its function is as follows. Prevents the cell division inhibition by proteins MinC and MinD at internal division sites while permitting inhibition at polar sites. This ensures cell division at the proper site by restricting the formation of a division septum at the midpoint of the long axis of the cell. The protein is Cell division topological specificity factor of Clostridium botulinum (strain Alaska E43 / Type E3).